The following is a 61-amino-acid chain: MDPNCSCAAGGSCTCAGSCKCKDCRCTSCKKSCCSCCPAGCARCAQGCICKGASDKCSCCA.

At Met1 the chain carries N-acetylmethionine. The tract at residues 1–29 (MDPNCSCAAGGSCTCAGSCKCKDCRCTSC) is beta. Residues Cys5, Cys7, Cys13, Cys15, Cys19, Cys21, Cys24, Cys26, Cys29, Cys33, Cys34, Cys36, Cys37, Cys41, Cys44, Cys48, Cys50, Cys57, Cys59, and Cys60 each coordinate a divalent metal cation. The segment at 30–61 (KKSCCSCCPAGCARCAQGCICKGASDKCSCCA) is alpha.

The protein belongs to the metallothionein superfamily. Type 1 family. As to quaternary structure, monomer.

Its function is as follows. Metallothioneins have a high content of cysteine residues that bind various heavy metals; these proteins are transcriptionally regulated by both heavy metals and glucocorticoids. The sequence is that of Metallothionein-2B (MT2B) from Sus scrofa (Pig).